Consider the following 278-residue polypeptide: HTH-type transcriptional activator RhaS (278 aa).

An HTH araC/xylS-type domain is found at 174 to 272 (NQLMAWLEDH…NWSPRDIRQG (99 aa)). 2 consecutive DNA-binding regions (H-T-H motif) follow at residues 191 to 212 (EAVA…KQHT) and 239 to 262 (VTEI…RREF).

In terms of assembly, binds DNA as a dimer.

It localises to the cytoplasm. Functionally, activates expression of the rhaBAD and rhaT operons. The protein is HTH-type transcriptional activator RhaS of Salmonella heidelberg (strain SL476).